A 254-amino-acid polypeptide reads, in one-letter code: Type III pantothenate kinase (254 aa).

6-13 contributes to the ATP binding site; the sequence is DVGNSNIV. Substrate contacts are provided by residues Tyr-100 and 107-110; that span reads GADR. The active-site Proton acceptor is the Asp-109. Residue Asp-129 coordinates K(+). Residue Thr-132 coordinates ATP. Thr-184 contacts substrate.

The protein belongs to the type III pantothenate kinase family. As to quaternary structure, homodimer. Requires NH4(+) as cofactor. K(+) is required as a cofactor.

The protein resides in the cytoplasm. The catalysed reaction is (R)-pantothenate + ATP = (R)-4'-phosphopantothenate + ADP + H(+). It functions in the pathway cofactor biosynthesis; coenzyme A biosynthesis; CoA from (R)-pantothenate: step 1/5. Catalyzes the phosphorylation of pantothenate (Pan), the first step in CoA biosynthesis. The sequence is that of Type III pantothenate kinase from Pelobacter propionicus (strain DSM 2379 / NBRC 103807 / OttBd1).